Here is a 542-residue protein sequence, read N- to C-terminus: Chaperonin GroEL (542 aa).

ATP-binding positions include 29-32, 86-90, G413, and D493; these read TLGP and DGTTT.

Belongs to the chaperonin (HSP60) family. Forms a cylinder of 14 subunits composed of two heptameric rings stacked back-to-back. Interacts with the co-chaperonin GroES.

Its subcellular location is the cytoplasm. It carries out the reaction ATP + H2O + a folded polypeptide = ADP + phosphate + an unfolded polypeptide.. Together with its co-chaperonin GroES, plays an essential role in assisting protein folding. The GroEL-GroES system forms a nano-cage that allows encapsulation of the non-native substrate proteins and provides a physical environment optimized to promote and accelerate protein folding. This chain is Chaperonin GroEL, found in Elusimicrobium minutum (strain Pei191).